Consider the following 180-residue polypeptide: MEVKMIILLFQILAISTLKSDSADIPEGYIQENVALRGRATQSAQLKGEFAGFAHASNAIDGNRDSNYHHGSCSHTEGDNSWWRVDLKQVYTITSVTITNRGDCCGERISGARILIGKHLENNGINNPECSTINIMAAGETKTFHCPQPMIGRYVTVYLPKAESLQLCEVEVNVLFPAPC.

The N-terminal stretch at Met1–Ser22 is a signal peptide. Residues Gln31 to Pro179 are F5/8 type C-like. Positions 58, 61, 63, and 72 each coordinate Ca(2+). 3 disulfides stabilise this stretch: Cys73-Cys168, Cys104-Cys105, and Cys130-Cys146. 2 residues coordinate alpha-L-fucose: His75 and Arg101. A Cell attachment site motif is present at residues Arg101 to Asp103. Residue Arg108 participates in alpha-L-fucose binding. Residues Cys168 and Glu169 each coordinate Ca(2+).

This sequence belongs to the fucolectin family. Homotrimer. Parenchymal hepatocytes.

It localises to the secreted. The protein resides in the extracellular space. Its function is as follows. Acts as a defensive agent. Recognizes blood group fucosylated oligosaccharides including A, B, H and Lewis B-type antigens. Does not recognize Lewis A antigen and has low affinity for monovalent haptens. The sequence is that of Fucolectin-3 from Anguilla japonica (Japanese eel).